The chain runs to 160 residues: Ribosomal RNA large subunit methyltransferase H (160 aa).

S-adenosyl-L-methionine-binding positions include L76, G108, and 127-132 (LGKMTW).

Belongs to the RNA methyltransferase RlmH family. As to quaternary structure, homodimer.

Its subcellular location is the cytoplasm. It carries out the reaction pseudouridine(1915) in 23S rRNA + S-adenosyl-L-methionine = N(3)-methylpseudouridine(1915) in 23S rRNA + S-adenosyl-L-homocysteine + H(+). Functionally, specifically methylates the pseudouridine at position 1915 (m3Psi1915) in 23S rRNA. This Rhizobium johnstonii (strain DSM 114642 / LMG 32736 / 3841) (Rhizobium leguminosarum bv. viciae) protein is Ribosomal RNA large subunit methyltransferase H.